A 202-amino-acid polypeptide reads, in one-letter code: Nucleoside triphosphate pyrophosphatase (202 aa).

Catalysis depends on aspartate 77, which acts as the Proton acceptor.

This sequence belongs to the Maf family. A divalent metal cation serves as cofactor.

The protein localises to the cytoplasm. It catalyses the reaction a ribonucleoside 5'-triphosphate + H2O = a ribonucleoside 5'-phosphate + diphosphate + H(+). It carries out the reaction a 2'-deoxyribonucleoside 5'-triphosphate + H2O = a 2'-deoxyribonucleoside 5'-phosphate + diphosphate + H(+). Its function is as follows. Nucleoside triphosphate pyrophosphatase. May have a dual role in cell division arrest and in preventing the incorporation of modified nucleotides into cellular nucleic acids. The protein is Nucleoside triphosphate pyrophosphatase of Rickettsia canadensis (strain McKiel).